The sequence spans 286 residues: E3 ubiquitin-protein ligase SINA-like 7 (286 aa).

The RING-type zinc finger occupies 51 to 87 (CPICYEAFTIPIFQCDNGHLACSSCCPKLNNKCPACT). The segment at 101–285 (VLESILIPCP…MRISVKKLNK (185 aa)) is SBD. The SIAH-type zinc finger occupies 104 to 162 (SILIPCPNAKLGCKKNVSYGKELTHEKECMFSHCACPALDCNYTSSYKDLYTHYRITHM). 8 residues coordinate Zn(2+): C109, C116, H128, C132, C139, C144, H156, and H161.

Belongs to the SINA (Seven in absentia) family.

It catalyses the reaction S-ubiquitinyl-[E2 ubiquitin-conjugating enzyme]-L-cysteine + [acceptor protein]-L-lysine = [E2 ubiquitin-conjugating enzyme]-L-cysteine + N(6)-ubiquitinyl-[acceptor protein]-L-lysine.. The protein operates within protein modification; protein ubiquitination. In terms of biological role, E3 ubiquitin-protein ligase that mediates ubiquitination and subsequent proteasomal degradation of target proteins. E3 ubiquitin ligases accept ubiquitin from an E2 ubiquitin-conjugating enzyme in the form of a thioester and then directly transfers the ubiquitin to targeted substrates. It probably triggers the ubiquitin-mediated degradation of different substrates. This chain is E3 ubiquitin-protein ligase SINA-like 7, found in Arabidopsis thaliana (Mouse-ear cress).